A 258-amino-acid chain; its full sequence is Phosphoribosylaminoimidazole-succinocarboxamide synthase (258 aa).

The protein belongs to the SAICAR synthetase family.

It catalyses the reaction 5-amino-1-(5-phospho-D-ribosyl)imidazole-4-carboxylate + L-aspartate + ATP = (2S)-2-[5-amino-1-(5-phospho-beta-D-ribosyl)imidazole-4-carboxamido]succinate + ADP + phosphate + 2 H(+). It functions in the pathway purine metabolism; IMP biosynthesis via de novo pathway; 5-amino-1-(5-phospho-D-ribosyl)imidazole-4-carboxamide from 5-amino-1-(5-phospho-D-ribosyl)imidazole-4-carboxylate: step 1/2. This chain is Phosphoribosylaminoimidazole-succinocarboxamide synthase, found in Rhizorhabdus wittichii (strain DSM 6014 / CCUG 31198 / JCM 15750 / NBRC 105917 / EY 4224 / RW1) (Sphingomonas wittichii).